A 367-amino-acid chain; its full sequence is uncharacterized protein (367 aa).

The helical transmembrane segment at Val8 to Leu28 threads the bilayer.

Its subcellular location is the membrane. This is an uncharacterized protein from Bradyrhizobium diazoefficiens (strain JCM 10833 / BCRC 13528 / IAM 13628 / NBRC 14792 / USDA 110).